Consider the following 872-residue polypeptide: Protein SCD5 (872 aa).

2 disordered regions span residues 1–98 and 209–239; these read MSFD…SGGD and PKPR…TGDQ. The span at 48–85 shows a compositional bias: polar residues; the sequence is FWDQGSRSHSDTTLSYRNNHSNTAADNATNVSSPQKDN. The short motif at 272–276 is the KKRVK motif; Required for interaction with GLC7, endocytosis and actin cytoskeleton organization element; the sequence is KKVRF. 2 disordered regions span residues 280-321 and 338-358; these read ITFQ…LDFT and SGLV…KKVL. Polar residues-rich tracts occupy residues 284–296 and 339–348; these read DPPN…SNNS and GLVSSLPSEQ. 12 repeat units span residues 405 to 424, 439 to 458, 479 to 498, 534 to 545, 564 to 575, 593 to 604, 608 to 619, 623 to 634, 636 to 647, 650 to 661, 683 to 694, and 717 to 728. The interval 405–448 is 3 X 20 AA approximate repeats; the sequence is QLPLEPLKPTATGSANHLVREEYNQGLHPSNGAIQTGLQPLKPT. 2 positions are modified to phosphothreonine; by PRK1: Thr416 and Thr450. The interval 460-489 is disordered; it reads HMEQPQSIKPSSTPETVTNSGGLQPLKPTA. Residues 462–481 show a composition bias toward polar residues; sequence EQPQSIKPSSTPETVTNSGG. The residue at position 490 (Thr490) is a Phosphothreonine; by PRK1. 2 disordered regions span residues 516 to 571 and 591 to 620; these read QFTN…TYSN and AFPP…QRSQ. The tract at residues 534–728 is 9 X 12 AA approximate repeats; the sequence is SPNITLPQSN…QNAANSYFQS (195 aa). A Phosphoserine modification is found at Ser564. Residues 594 to 620 show a composition bias toward polar residues; sequence PQNTLPQHQQSHLLSPQNTIPQHQRSQ. The disordered stretch occupies residues 649-681; that stretch reads ISPQNTYTNNQQQPQHLPPPPPPRAQQQQQGAI. Residues 651–663 show a composition bias toward low complexity; the sequence is PQNTYTNNQQQPQ. The segment covering 697 to 727 has biased composition (polar residues); it reads LVPTQPSYTNSPSIQSPNFLSPQNAANSYFQ. Disordered stretches follow at residues 697 to 758 and 806 to 838; these read LVPT…ISSF and NSDI…QFPF. Residues 728-745 show a composition bias toward low complexity; it reads SLLSSSPSPNPTPSNAST. Composition is skewed to polar residues over residues 746 to 758 and 806 to 815; these read VNGN…ISSF and NSDIHSQPNK. Over residues 823 to 835 the composition is skewed to low complexity; sequence QQVHQQQQQQQQQ.

In terms of assembly, interacts (via KKVRF motif) with phosphatase GLC7. In terms of processing, phosphorylation by PRK1 and/or AKL1 on Thr-416, Thr-450 and Thr-490 of repeats 1-1, 1-2 and/or 1-3 negatively regulates SCD5 function in endocytosis and actin cytoskeleton organization.

Its subcellular location is the membrane. Functionally, regulates both fluid phase and receptor-mediated endocytosis. Involved in vesicular transport at a late stage of the secretory pathway. Regulates actin cytoskeleton organization. The polypeptide is Protein SCD5 (SCD5) (Saccharomyces cerevisiae (strain ATCC 204508 / S288c) (Baker's yeast)).